A 325-amino-acid polypeptide reads, in one-letter code: MSFSSSAKAEVSKKLLQTSCCRKAAIAAFLKFAGVIYKSEGIFSFKASFENAQTARAYFLLMKNGFSKHCEVTIKKNSKLNKNYVYTIILPPSTDNLQILKELHFVKKTSKEYILSFSLKEELVKKKCCKKAFLQATFLSCGSITNPEKMYHLEFDMKTKEDAEFLQKVLRSFEFEAKIVERKSHYVVYLKEGEQIVDFLNIIGAHAALLELENIRIVKELRNNVNRLVNCETANLEKTINASMRHIENIEFIEKTIGIDNLPENLREIARLRIKYKDASLKELGSMLKNPLGKSGVNHRLRKIDKIAEELRKGGILYAKPSDES.

A DNA-binding region (H-T-H motif) is located at residues 280-313; sequence SLKELGSMLKNPLGKSGVNHRLRKIDKIAEELRK.

Belongs to the WhiA family.

Functionally, involved in cell division and chromosome segregation. This is Probable cell division protein WhiA from Caldicellulosiruptor saccharolyticus (strain ATCC 43494 / DSM 8903 / Tp8T 6331).